Reading from the N-terminus, the 461-residue chain is L-seryl-tRNA(Sec) selenium transferase (461 aa).

Lys294 is modified (N6-(pyridoxal phosphate)lysine).

This sequence belongs to the SelA family. The cofactor is pyridoxal 5'-phosphate.

It is found in the cytoplasm. It carries out the reaction L-seryl-tRNA(Sec) + selenophosphate + H(+) = L-selenocysteinyl-tRNA(Sec) + phosphate. It participates in aminoacyl-tRNA biosynthesis; selenocysteinyl-tRNA(Sec) biosynthesis; selenocysteinyl-tRNA(Sec) from L-seryl-tRNA(Sec) (bacterial route): step 1/1. Functionally, converts seryl-tRNA(Sec) to selenocysteinyl-tRNA(Sec) required for selenoprotein biosynthesis. The polypeptide is L-seryl-tRNA(Sec) selenium transferase (Haemophilus influenzae (strain PittEE)).